The sequence spans 138 residues: U1 small nuclear ribonucleoprotein C (138 aa).

The Matrin-type zinc-finger motif lies at 4-36 (YYCDYCDTFLTHDSPSVRKTHNNGRKHKENVRF). The tract at residues 58 to 138 (QSKPNSQMPP…MGRPPMSLRS (81 aa)) is disordered. The segment covering 67 to 109 (PNAPPGLMPPPGMLPPPGGMPPGRMPPQGLPFPPPGPIPPPPG) has biased composition (pro residues). Residues 113–138 (MRPPHGQMHMGGPRPQMGRPPMSLRS) show a composition bias toward low complexity.

This sequence belongs to the U1 small nuclear ribonucleoprotein C family. In terms of assembly, U1 snRNP is composed of the 7 core Sm proteins B/B', D1, D2, D3, E, F and G that assemble in a heptameric protein ring on the Sm site of the small nuclear RNA to form the core snRNP, and at least 3 U1 snRNP-specific proteins U1-70K, U1-A and U1-C. U1-C interacts with U1 snRNA and the 5' splice-site region of the pre-mRNA.

Its subcellular location is the nucleus. Its function is as follows. Component of the spliceosomal U1 snRNP, which is essential for recognition of the pre-mRNA 5' splice-site and the subsequent assembly of the spliceosome. U1-C is directly involved in initial 5' splice-site recognition for both constitutive and regulated alternative splicing. The interaction with the 5' splice-site seems to precede base-pairing between the pre-mRNA and the U1 snRNA. Stimulates commitment or early (E) complex formation by stabilizing the base pairing of the 5' end of the U1 snRNA and the 5' splice-site region. This Nematostella vectensis (Starlet sea anemone) protein is U1 small nuclear ribonucleoprotein C.